A 308-amino-acid chain; its full sequence is Cap-specific mRNA (nucleoside-2'-O-)-methyltransferase (308 aa).

Y30 lines the mRNA pocket. 8 residues coordinate S-adenosyl-L-methionine: Q46, Y74, G76, G80, D103, R105, V124, and D147. A binding to NPH-I region spans residues 177–257; sequence PIASSLKWRC…NTKIRPKIVL (81 aa). The active-site For methyltransferase activity is K183. Residues 185 to 188, D190, 213 to 215, and E241 contribute to the mRNA site; these read RCPF and SAE.

The protein belongs to the class I-like SAM-binding methyltransferase superfamily. Poxvirus/kinetoplastid 2'-O-MTase family. As to quaternary structure, interacts with poly(A) polymerase catalytic subunit OPG063. Interacts with OPG109 and OPG123; these interactions might help linking transcription to capping and polyadenylation.

It is found in the virion. It carries out the reaction a 5'-end (N(7)-methyl 5'-triphosphoguanosine)-ribonucleoside in mRNA + S-adenosyl-L-methionine = a 5'-end (N(7)-methyl 5'-triphosphoguanosine)-(2'-O-methyl-ribonucleoside) in mRNA + S-adenosyl-L-homocysteine + H(+). Displays methyltransferase, positive regulation of the poly(A) polymerase and transcription elongation activities. Involved in the modification of both mRNA ends and in intermediate and late gene positive transcription elongation. At the mRNAs 5' end, methylates the ribose 2' OH group of the first transcribed nucleotide, thereby producing a 2'-O-methylpurine cap. At the 3' end, functions as a processivity factor which stimulates the activity of the viral poly(A) polymerase OPG063 that creates mRNA's poly(A) tail. In the presence of OPG102, OPG063 does not dissociate from the RNA allowing tail elongation to around 250 adenylates. This chain is Cap-specific mRNA (nucleoside-2'-O-)-methyltransferase (OPG102), found in Fowlpox virus (strain NVSL) (FPV).